Here is a 225-residue protein sequence, read N- to C-terminus: THAP domain-containing protein 1 (225 aa).

The segment at 5–57 (CSAYGCKNRYQKDRNISFHKFPLARPEVCVQWVSAMSRRNFKPTKYSNICSQH) adopts a THAP-type zinc-finger fold. Residues 149-196 (TLEDCVQQKRRVQRLQEQMEKLRRRMKTLQQKCRRQERQLERLRANRG) are a coiled coil.

It belongs to the THAP1 family.

Its subcellular location is the nucleus. The protein localises to the nucleoplasm. Functionally, DNA-binding transcription regulator that regulates endothelial cell proliferation and G1/S cell-cycle progression. Specifically binds the 5'-[AT]NTNN[GT]GGCA[AGT]-3' core DNA sequence and acts by modulating expression of pRB-E2F cell-cycle target genes. This chain is THAP domain-containing protein 1 (thap1), found in Danio rerio (Zebrafish).